The chain runs to 357 residues: NADH-quinone oxidoreductase subunit H (357 aa).

The next 8 membrane-spanning stretches (helical) occupy residues 20-40 (WLVLWTIVKIVVIAVPIILCV), 92-112 (ILFVVAPVVTLMPALAAWAVV), 127-147 (LLYVMAITSIGVYGVIVAGWA), 165-185 (VSYELAIGFVLVTVLLVSGSL), 206-226 (FLSWNWLPLLPLFVIYVISAV), 254-274 (MAFALFFLGEYANMILLSCMA), 294-314 (IPGWIWLGIKTFCVVSLFVWF), and 329-349 (LGWKIFIPLTGVWLVVVAIWM).

It belongs to the complex I subunit 1 family. As to quaternary structure, NDH-1 is composed of 14 different subunits. Subunits NuoA, H, J, K, L, M, N constitute the membrane sector of the complex.

The protein resides in the cell inner membrane. The enzyme catalyses a quinone + NADH + 5 H(+)(in) = a quinol + NAD(+) + 4 H(+)(out). NDH-1 shuttles electrons from NADH, via FMN and iron-sulfur (Fe-S) centers, to quinones in the respiratory chain. The immediate electron acceptor for the enzyme in this species is believed to be ubiquinone. Couples the redox reaction to proton translocation (for every two electrons transferred, four hydrogen ions are translocated across the cytoplasmic membrane), and thus conserves the redox energy in a proton gradient. This subunit may bind ubiquinone. The sequence is that of NADH-quinone oxidoreductase subunit H from Bordetella petrii (strain ATCC BAA-461 / DSM 12804 / CCUG 43448).